The following is a 724-amino-acid chain: Methionine--tRNA ligase (724 aa).

Positions 11–21 (PYANGPIHAGH) match the 'HIGH' region motif. Residues C143, C146, C156, and C159 each contribute to the Zn(2+) site. The 'KMSKS' region signature appears at 344 to 348 (KFSTS). T347 is a binding site for ATP. Residues 624 to 724 (EFSKIDLRIG…KEVKLGAKVR (101 aa)) form the tRNA-binding domain.

It belongs to the class-I aminoacyl-tRNA synthetase family. MetG type 1 subfamily. Homodimer. It depends on Zn(2+) as a cofactor.

The protein resides in the cytoplasm. The enzyme catalyses tRNA(Met) + L-methionine + ATP = L-methionyl-tRNA(Met) + AMP + diphosphate. Is required not only for elongation of protein synthesis but also for the initiation of all mRNA translation through initiator tRNA(fMet) aminoacylation. The sequence is that of Methionine--tRNA ligase from Pyrococcus furiosus (strain ATCC 43587 / DSM 3638 / JCM 8422 / Vc1).